The primary structure comprises 107 residues: Iron-binding protein IscA (107 aa).

Positions 35, 99, and 101 each coordinate Fe cation.

This sequence belongs to the HesB/IscA family. In terms of assembly, homodimer; may form tetramers and higher multimers. It depends on Fe cation as a cofactor.

In terms of biological role, is able to transfer iron-sulfur clusters to apo-ferredoxin. Multiple cycles of [2Fe2S] cluster formation and transfer are observed, suggesting that IscA acts catalytically. Recruits intracellular free iron so as to provide iron for the assembly of transient iron-sulfur cluster in IscU in the presence of IscS, L-cysteine and the thioredoxin reductase system TrxA/TrxB. The sequence is that of Iron-binding protein IscA from Salmonella newport (strain SL254).